The primary structure comprises 606 residues: Cryptochrome-1 (606 aa).

A Photolyase/cryptochrome alpha/beta domain is found at 3 to 132 (VNAVHWFRKG…EVIVRISHTL (130 aa)). K11 participates in a covalent cross-link: Glycyl lysine isopeptide (Lys-Gly) (interchain with G-Cter in ubiquitin). Residues 50–54 (NRWRF) carry the LIR 1 motif. Position 71 is a phosphoserine; by AMPK (S71). The LIR 2 signature appears at 82 to 87 (DVFPRL). Residue K107 forms a Glycyl lysine isopeptide (Lys-Gly) (interchain with G-Cter in ubiquitin) linkage. Positions 151–156 (KRFQTL) match the LIR 3 motif. Residue K159 forms a Glycyl lysine isopeptide (Lys-Gly) (interchain with G-Cter in ubiquitin) linkage. S247 is subject to Phosphoserine; by MAPK. S252 lines the FAD pocket. 2 consecutive short sequence motifs (LIR) follow at residues 255–260 (LRFGCL) and 271–276 (DLYKKV). S280 is subject to Phosphoserine; by AMPK. The short motif at 285-290 (SLYGQL) is the LIR 6 element. Position 289 (Q289) interacts with FAD. Residue K329 forms a Glycyl lysine isopeptide (Lys-Gly) (interchain with G-Cter in ubiquitin) linkage. The short motif at 335–339 (TGFPW) is the LIR 7 element. H355 provides a ligand contact to FAD. The interval 371 to 470 (WISWEEGMKV…LIGVNYPKPM (100 aa)) is required for inhibition of CLOCK-BMAL1-mediated transcription. The short motif at 379–384 (KVFEEL) is the LIR 8 element. FAD is bound at residue 387-389 (DAD). Short sequence motifs (LIR) lie at residues 395–400 (GSWMWL), 411–416 (HCYCPV), and 430–435 (RRYLPV). Positions 471 to 493 (VNHAEASRLNIERMKQIYQQLSR) are interaction with TIMELESS. K485 is covalently cross-linked (Glycyl lysine isopeptide (Lys-Gly) (interchain with G-Cter in ubiquitin)). 2 consecutive short sequence motifs (LIR) follow at residues 486-491 (QIYQQL) and 492-497 (SRYRGL). The disordered stretch occupies residues 559–606 (YAHGDSQQTHSLKQGRSSAGTGLSSGKRPSQEEDAQSVGPKVQRQSSN). Positions 563 to 586 (DSQQTHSLKQGRSSAGTGLSSGKR) are enriched in polar residues. K585 participates in a covalent cross-link: Glycyl lysine isopeptide (Lys-Gly) (interchain with G-Cter in ubiquitin). A Phosphoserine modification is found at S588.

The protein belongs to the DNA photolyase class-1 family. Component of the circadian core oscillator, which includes the CRY proteins, CLOCK or NPAS2, BMAL1 or BMAL2, CSNK1D and/or CSNK1E, TIMELESS, and the PER proteins. Interacts directly with TIMELESS. Interacts directly with PER1 and PER2; interaction with PER2 inhibits its ubiquitination and vice versa. Interacts with PER3. Interacts with FBXL21. Interacts with FBXL3. Interacts with PPP5C (via TPR repeats). Interacts with CLOCK-BMAL1 independently of PER2 and DNA. Interacts with HDAC1, HDAC2 and SIN3B. Interacts with nuclear receptors AR, NR1D1, NR3C1/GR, RORA and RORC; the interaction with at least NR3C1/GR is ligand dependent. Interacts with PRKDC. Interacts with the G protein subunit alpha GNAS; the interaction may block GPCR-mediated regulation of cAMP concentrations. Interacts with PRMT5. Interacts with EZH2. Interacts with MYBBP1A, DOCK7, HNRNPU, RPL7A, RPL8 and RPS3. Interacts with MAP1LC3B. Interacts with CLOCK. Interacts with BMAL1. Interacts weakly with HDAC3; this interaction is enhanced in the presence of FBXL3. Interacts with TRIM28, KCTD5 and DDB1. Interacts with DTL. Interacts with DDB1-CUL4A complex. Interacts with FOXO1. Interacts with PSMD2 in a KDM8-dependent manner. Interacts with KDM8 in a FBXL3-dependent manner. Interacts with PPARA. Interacts with PPARG in a ligand-dependent manner. Interacts with PPARD (via domain NR LBD) in a ligand-dependent manner. Interacts with NR1I2 (via domain NR LBD) in a ligand-dependent manner. Interacts with NR1I3, VDR and HNF4A. It depends on FAD as a cofactor. (6R)-5,10-methylene-5,6,7,8-tetrahydrofolate serves as cofactor. In terms of processing, phosphorylation on Ser-247 by MAPK is important for the inhibition of CLOCK-BMAL1-mediated transcriptional activity. Phosphorylation by CSNK1E requires interaction with PER1 or PER2. Phosphorylation at Ser-71 and Ser-280 by AMPK decreases protein stability. Phosphorylation at Ser-588 exhibits a robust circadian rhythm with a peak at CT8, increases protein stability, prevents SCF(FBXL3)-mediated degradation and is antagonized by interaction with PRKDC. Ubiquitinated by the SCF(FBXL3) and SCF(FBXL21) complexes, regulating the balance between degradation and stabilization. The SCF(FBXL3) complex is mainly nuclear and mediates ubiquitination and subsequent degradation of CRY1. In contrast, cytoplasmic SCF(FBXL21) complex-mediated ubiquitination leads to stabilize CRY1 and counteract the activity of the SCF(FBXL3) complex. The SCF(FBXL3) and SCF(FBXL21) complexes probably mediate ubiquitination at different Lys residues. Ubiquitination at Lys-11 and Lys-107 are specifically ubiquitinated by the SCF(FBXL21) complex but not by the SCF(FBXL3) complex. Ubiquitination may be inhibited by PER2. Deubiquitinated by USP7. Post-translationally, undergoes autophagy-mediated degradation in the liver in a time-dependent manner. Autophagic degradation of CRY1 (an inhibitor of gluconeogenesis) occurs during periods of reduced feeding allowing induction of gluconeogenesis and maintenance of blood glucose levels. In terms of tissue distribution, expressed in cones, amacrine cells, and retinal ganglion cells of the retina (at protein level). Expressed in all tissues examined including heart, brain, spleen, lung, liver, skeletal muscle, kidney and testis. Higher levels in brain, liver and testis. In the retina, highly expressed in the ganglion cell layer (GCL) and in the inner nuclear layer (INL). Evenly distributed in central and peripheral retina. In the brain, highly expressed in the suprachiasmatic nucleus (SCN). High levels in cerebral cortical layers particularly in the pyramidial cell layer of the hippocampus, the granular cell layer of the dentate gyrus (DG) and the pyramidal cell layer of the piriform cortex (PFC).

The protein resides in the cytoplasm. The protein localises to the nucleus. Its activity is regulated as follows. KL001 (N-[3-(9H-carbazol-9-yl)-2-hydroxypropyl]-N-(2-furanylmethyl)-methanesulfonamide) binds to CRY1 and stabilizes it by inhibiting FBXL3- and ubiquitin-dependent degradation of CRY1 resulting in lengthening of the circadian periods. KL001-mediated CRY1 stabilization can inhibit glucagon-induced gluconeogenesis in primary hepatocytes. Transcriptional repressor which forms a core component of the circadian clock. The circadian clock, an internal time-keeping system, regulates various physiological processes through the generation of approximately 24 hour circadian rhythms in gene expression, which are translated into rhythms in metabolism and behavior. It is derived from the Latin roots 'circa' (about) and 'diem' (day) and acts as an important regulator of a wide array of physiological functions including metabolism, sleep, body temperature, blood pressure, endocrine, immune, cardiovascular, and renal function. Consists of two major components: the central clock, residing in the suprachiasmatic nucleus (SCN) of the brain, and the peripheral clocks that are present in nearly every tissue and organ system. Both the central and peripheral clocks can be reset by environmental cues, also known as Zeitgebers (German for 'timegivers'). The predominant Zeitgeber for the central clock is light, which is sensed by retina and signals directly to the SCN. The central clock entrains the peripheral clocks through neuronal and hormonal signals, body temperature and feeding-related cues, aligning all clocks with the external light/dark cycle. Circadian rhythms allow an organism to achieve temporal homeostasis with its environment at the molecular level by regulating gene expression to create a peak of protein expression once every 24 hours to control when a particular physiological process is most active with respect to the solar day. Transcription and translation of core clock components (CLOCK, NPAS2, BMAL1, BMAL2, PER1, PER2, PER3, CRY1 and CRY2) plays a critical role in rhythm generation, whereas delays imposed by post-translational modifications (PTMs) are important for determining the period (tau) of the rhythms (tau refers to the period of a rhythm and is the length, in time, of one complete cycle). A diurnal rhythm is synchronized with the day/night cycle, while the ultradian and infradian rhythms have a period shorter and longer than 24 hours, respectively. Disruptions in the circadian rhythms contribute to the pathology of cardiovascular diseases, cancer, metabolic syndromes and aging. A transcription/translation feedback loop (TTFL) forms the core of the molecular circadian clock mechanism. Transcription factors, CLOCK or NPAS2 and BMAL1 or BMAL2, form the positive limb of the feedback loop, act in the form of a heterodimer and activate the transcription of core clock genes and clock-controlled genes (involved in key metabolic processes), harboring E-box elements (5'-CACGTG-3') within their promoters. The core clock genes: PER1/2/3 and CRY1/2 which are transcriptional repressors form the negative limb of the feedback loop and interact with the CLOCK|NPAS2-BMAL1|BMAL2 heterodimer inhibiting its activity and thereby negatively regulating their own expression. This heterodimer also activates nuclear receptors NR1D1/2 and RORA/B/G, which form a second feedback loop and which activate and repress BMAL1 transcription, respectively. CRY1 and CRY2 have redundant functions but also differential and selective contributions at least in defining the pace of the SCN circadian clock and its circadian transcriptional outputs. More potent transcriptional repressor in cerebellum and liver than CRY2, though more effective in lengthening the period of the SCN oscillator. On its side, CRY2 seems to play a critical role in tuning SCN circadian period by opposing the action of CRY1. With CRY2, is dispensable for circadian rhythm generation but necessary for the development of intercellular networks for rhythm synchrony. Capable of translocating circadian clock core proteins such as PER proteins to the nucleus. Interacts with CLOCK-BMAL1 independently of PER proteins and is found at CLOCK-BMAL1-bound sites, suggesting that CRY may act as a molecular gatekeeper to maintain CLOCK-BMAL1 in a poised and repressed state until the proper time for transcriptional activation. Represses the CLOCK-BMAL1 induced transcription of BHLHE40/DEC1, ATF4, MTA1, KLF10 and NAMPT. May repress circadian target genes expression in collaboration with HDAC1 and HDAC2 through histone deacetylation. Mediates the clock-control activation of ATR and modulates ATR-mediated DNA damage checkpoint. In liver, mediates circadian regulation of cAMP signaling and gluconeogenesis by binding to membrane-coupled G proteins and blocking glucagon-mediated increases in intracellular cAMP concentrations and CREB1 phosphorylation. Inhibits hepatic gluconeogenesis by decreasing nuclear FOXO1 levels that down-regulates gluconeogenic gene expression. Besides its role in the maintenance of the circadian clock, is also involved in the regulation of other processes. Represses glucocorticoid receptor NR3C1/GR-induced transcriptional activity by binding to glucocorticoid response elements (GREs). Plays a key role in glucose and lipid metabolism modulation, in part, through the transcriptional regulation of genes involved in these pathways, such as LEP or ACSL4. Represses PPARD and its target genes in the skeletal muscle and limits exercise capacity. Plays an essential role in the generation of circadian rhythms in the retina. Represses the transcriptional activity of NR1I2. In Mus musculus (Mouse), this protein is Cryptochrome-1 (Cry1).